Here is a 190-residue protein sequence, read N- to C-terminus: Imidazoleglycerol-phosphate dehydratase (190 aa).

This sequence belongs to the imidazoleglycerol-phosphate dehydratase family.

The protein resides in the cytoplasm. It carries out the reaction D-erythro-1-(imidazol-4-yl)glycerol 3-phosphate = 3-(imidazol-4-yl)-2-oxopropyl phosphate + H2O. It participates in amino-acid biosynthesis; L-histidine biosynthesis; L-histidine from 5-phospho-alpha-D-ribose 1-diphosphate: step 6/9. This is Imidazoleglycerol-phosphate dehydratase from Wolinella succinogenes (strain ATCC 29543 / DSM 1740 / CCUG 13145 / JCM 31913 / LMG 7466 / NCTC 11488 / FDC 602W) (Vibrio succinogenes).